The sequence spans 362 residues: Formate dehydrogenase (362 aa).

2 residues coordinate substrate: Val-93 and Asn-119. Residues 174–175 (RI), Asp-195, 230–234 (PLHAG), Thr-256, Asp-282, 311–314 (HYSG), and Ser-357 contribute to the NAD(+) site.

Belongs to the D-isomer specific 2-hydroxyacid dehydrogenase family. FDH subfamily. Homodimer.

Its subcellular location is the cytoplasm. The catalysed reaction is formate + NAD(+) = CO2 + NADH. Its function is as follows. Catalyzes the NAD(+)-dependent oxidation of formate to carbon dioxide. Formate oxidation is the final step in the methanol oxidation pathway in methylotrophic microorganisms. Has a role in the detoxification of exogenous formate in non-methylotrophic organisms. The polypeptide is Formate dehydrogenase (Pichia angusta (Yeast)).